The sequence spans 143 residues: Large-conductance mechanosensitive channel (143 aa).

The next 3 membrane-spanning stretches (helical) occupy residues 21-41 (VGVI…ADII), 44-64 (VVGL…LGTV), and 86-106 (GNFI…FMMV).

The protein belongs to the MscL family. In terms of assembly, homopentamer.

It localises to the cell inner membrane. Functionally, channel that opens in response to stretch forces in the membrane lipid bilayer. May participate in the regulation of osmotic pressure changes within the cell. This Variovorax paradoxus (strain S110) protein is Large-conductance mechanosensitive channel.